A 357-amino-acid chain; its full sequence is Protein RecA (357 aa).

Position 78-85 (78-85) interacts with ATP; it reads GPESSGKT.

The protein belongs to the RecA family.

It is found in the cytoplasm. Can catalyze the hydrolysis of ATP in the presence of single-stranded DNA, the ATP-dependent uptake of single-stranded DNA by duplex DNA, and the ATP-dependent hybridization of homologous single-stranded DNAs. It interacts with LexA causing its activation and leading to its autocatalytic cleavage. The chain is Protein RecA from Cereibacter sphaeroides (strain ATCC 17029 / ATH 2.4.9) (Rhodobacter sphaeroides).